A 177-amino-acid polypeptide reads, in one-letter code: ATP synthase subunit delta (177 aa).

It belongs to the ATPase delta chain family. As to quaternary structure, F-type ATPases have 2 components, F(1) - the catalytic core - and F(0) - the membrane proton channel. F(1) has five subunits: alpha(3), beta(3), gamma(1), delta(1), epsilon(1). F(0) has three main subunits: a(1), b(2) and c(10-14). The alpha and beta chains form an alternating ring which encloses part of the gamma chain. F(1) is attached to F(0) by a central stalk formed by the gamma and epsilon chains, while a peripheral stalk is formed by the delta and b chains.

The protein localises to the cell inner membrane. Functionally, f(1)F(0) ATP synthase produces ATP from ADP in the presence of a proton or sodium gradient. F-type ATPases consist of two structural domains, F(1) containing the extramembraneous catalytic core and F(0) containing the membrane proton channel, linked together by a central stalk and a peripheral stalk. During catalysis, ATP synthesis in the catalytic domain of F(1) is coupled via a rotary mechanism of the central stalk subunits to proton translocation. Its function is as follows. This protein is part of the stalk that links CF(0) to CF(1). It either transmits conformational changes from CF(0) to CF(1) or is implicated in proton conduction. This Colwellia psychrerythraea (strain 34H / ATCC BAA-681) (Vibrio psychroerythus) protein is ATP synthase subunit delta.